Reading from the N-terminus, the 363-residue chain is UDP-N-acetylglucosamine--N-acetylmuramyl-(pentapeptide) pyrophosphoryl-undecaprenol N-acetylglucosamine transferase (363 aa).

UDP-N-acetyl-alpha-D-glucosamine-binding positions include 14-16 (TGG), arginine 171, serine 200, and glutamine 290.

This sequence belongs to the glycosyltransferase 28 family. MurG subfamily.

It localises to the cell inner membrane. It carries out the reaction di-trans,octa-cis-undecaprenyl diphospho-N-acetyl-alpha-D-muramoyl-L-alanyl-D-glutamyl-meso-2,6-diaminopimeloyl-D-alanyl-D-alanine + UDP-N-acetyl-alpha-D-glucosamine = di-trans,octa-cis-undecaprenyl diphospho-[N-acetyl-alpha-D-glucosaminyl-(1-&gt;4)]-N-acetyl-alpha-D-muramoyl-L-alanyl-D-glutamyl-meso-2,6-diaminopimeloyl-D-alanyl-D-alanine + UDP + H(+). Its pathway is cell wall biogenesis; peptidoglycan biosynthesis. Functionally, cell wall formation. Catalyzes the transfer of a GlcNAc subunit on undecaprenyl-pyrophosphoryl-MurNAc-pentapeptide (lipid intermediate I) to form undecaprenyl-pyrophosphoryl-MurNAc-(pentapeptide)GlcNAc (lipid intermediate II). This is UDP-N-acetylglucosamine--N-acetylmuramyl-(pentapeptide) pyrophosphoryl-undecaprenol N-acetylglucosamine transferase from Borreliella burgdorferi (strain ATCC 35210 / DSM 4680 / CIP 102532 / B31) (Borrelia burgdorferi).